The primary structure comprises 141 residues: Large ribosomal subunit protein uL13 (141 aa).

The protein belongs to the universal ribosomal protein uL13 family. As to quaternary structure, part of the 50S ribosomal subunit.

This protein is one of the early assembly proteins of the 50S ribosomal subunit, although it is not seen to bind rRNA by itself. It is important during the early stages of 50S assembly. This chain is Large ribosomal subunit protein uL13, found in Helicobacter pylori (strain P12).